We begin with the raw amino-acid sequence, 316 residues long: Protein FLUORESCENT IN BLUE LIGHT, chloroplastic (316 aa).

Residues 1 to 26 (MAALIRCCSSFSHTSGGQPPPRDKSR) constitute a chloroplast transit peptide. A helical membrane pass occupies residues 125–145 (MFSMPILLLVALIGATVGGLL). Positions 144–175 (LLARQRKGELQRLNEQLRQINAALRRQAKIES) form a coiled coil. 3 TPR repeats span residues 203 to 236 (LISKLKTGKTFLRNQEPEKAYTEFKIALELAQSL), 243 to 276 (KKAARGLGASLQRQGKYREAIQYHSMVLAISKRE), and 283 to 316 (TEAYGAIADCYTELGDLEKAGKFYDTYIARLETD).

In terms of assembly, part of the FLU-containing chloroplast membrane complex composed of FLU, CRD1, PORB, PORC, CHLP and HEMA1. Interacts with HEMA1 (via C-terminus) only in the absence of light. No interaction with HEMA2.

It is found in the plastid. Its subcellular location is the chloroplast membrane. The protein resides in the chloroplast thylakoid membrane. Functionally, negative regulator of tetrapyrrole biosynthesis (including chlorophyll) in chloroplasts, probably via HEMA1 repression. Inhibits especially the magnesium ion Mg(2+) branch of tetrapyrrole biosynthesis, but independently of heme. The protein is Protein FLUORESCENT IN BLUE LIGHT, chloroplastic (FLU) of Arabidopsis thaliana (Mouse-ear cress).